A 196-amino-acid chain; its full sequence is Chaperone protein TorD (196 aa).

The protein belongs to the TorD/DmsD family. TorD subfamily.

The protein resides in the cytoplasm. Functionally, involved in the biogenesis of TorA. Acts on TorA before the insertion of the molybdenum cofactor and, as a result, probably favors a conformation of the apoenzyme that is competent for acquiring the cofactor. The sequence is that of Chaperone protein TorD from Pasteurella multocida (strain Pm70).